Reading from the N-terminus, the 239-residue chain is Ribosomal RNA small subunit methyltransferase G (239 aa).

Residues G77, F82, 128 to 129 (AE), and R147 contribute to the S-adenosyl-L-methionine site.

It belongs to the methyltransferase superfamily. RNA methyltransferase RsmG family.

The protein resides in the cytoplasm. In terms of biological role, specifically methylates the N7 position of guanine in position 535 of 16S rRNA. The chain is Ribosomal RNA small subunit methyltransferase G from Bacillus cereus (strain G9842).